A 429-amino-acid chain; its full sequence is WRKY transcription factor 44 (429 aa).

A DNA-binding region (WRKY 1) is located at residues 159–223; it reads TGDRSSVDGY…YQGEHNHSKP (65 aa). Zn(2+) contacts are provided by C190, C195, H218, and H220. Disordered regions lie at residues 214 to 279 and 292 to 348; these read YQGE…RTEK and AVPR…SDSL. 3 stretches are compositionally biased toward polar residues: residues 254-275, 295-313, and 334-345; these read QDPN…STQN, RSTN…SSQC, and SEAGVSQGSVES. The segment at residues 343–408 is a DNA-binding region (WRKY 2); sequence VESDSLEDGF…YEGKHNHHLL (66 aa). Zn(2+)-binding residues include C374, C379, H403, and H405. Low complexity predominate over residues 410 to 422; it reads SPPSSSTLPFNSP. The segment at 410–429 is disordered; the sequence is SPPSSSTLPFNSPQLSKQTI.

This sequence belongs to the WRKY group I family. In terms of tissue distribution, leaf promordia, trichomes, atrichoblasts, fertilized eggs, seed coat.

The protein localises to the nucleus. Functionally, transcription factor. Interacts specifically with the W box (5'-(T)TGAC[CT]-3'), a frequently occurring elicitor-responsive cis-acting element. Regulates trichome development, production of mucilage and tannin in seed coats, and maybe root hair development. This is WRKY transcription factor 44 (WRKY44) from Arabidopsis thaliana (Mouse-ear cress).